The following is a 404-amino-acid chain: XK-related protein 8 (404 aa).

8 helical membrane passes run 14–34 (FVFS…DVWV), 44–64 (FFWF…VQMF), 167–187 (AVQF…VVDY), 206–226 (SLIY…ALAL), 227–247 (FASV…LVFV), 263–283 (GEWL…FNVA), 292–312 (AIYH…WWCC), and 319–339 (EPYA…GLLF).

The protein belongs to the XK family.

The protein resides in the cell membrane. It catalyses the reaction a 1,2-diacyl-sn-glycero-3-phospho-L-serine(in) = a 1,2-diacyl-sn-glycero-3-phospho-L-serine(out). Phospholipid scramblase that promotes phosphatidylserine exposure on apoptotic cell surface, possibly by mediating phospholipid scrambling. Phosphatidylserine is a specific marker only present at the surface of apoptotic cells and acts as a specific signal for engulfment. The polypeptide is XK-related protein 8 (Tetraodon nigroviridis (Spotted green pufferfish)).